The following is a 98-amino-acid chain: Aspartyl/glutamyl-tRNA(Asn/Gln) amidotransferase subunit C (98 aa).

Belongs to the GatC family. In terms of assembly, heterotrimer of A, B and C subunits.

It carries out the reaction L-glutamyl-tRNA(Gln) + L-glutamine + ATP + H2O = L-glutaminyl-tRNA(Gln) + L-glutamate + ADP + phosphate + H(+). The enzyme catalyses L-aspartyl-tRNA(Asn) + L-glutamine + ATP + H2O = L-asparaginyl-tRNA(Asn) + L-glutamate + ADP + phosphate + 2 H(+). Its function is as follows. Allows the formation of correctly charged Asn-tRNA(Asn) or Gln-tRNA(Gln) through the transamidation of misacylated Asp-tRNA(Asn) or Glu-tRNA(Gln) in organisms which lack either or both of asparaginyl-tRNA or glutaminyl-tRNA synthetases. The reaction takes place in the presence of glutamine and ATP through an activated phospho-Asp-tRNA(Asn) or phospho-Glu-tRNA(Gln). This chain is Aspartyl/glutamyl-tRNA(Asn/Gln) amidotransferase subunit C, found in Bifidobacterium adolescentis (strain ATCC 15703 / DSM 20083 / NCTC 11814 / E194a).